Reading from the N-terminus, the 496-residue chain is Anaerobic nitric oxide reductase flavorubredoxin (496 aa).

The tract at residues 30-210 is zinc metallo-hydrolase; that stretch reads TKGTSYNSYL…PFSALVTAKI (181 aa). Positions 79, 81, 83, 147, 166, and 227 each coordinate Fe cation. Residues 254 to 393 form the Flavodoxin-like domain; sequence ITIFYDSMSN…LCREHGQFIA (140 aa). Residues 260–264 and 342–369 contribute to the FMN site; these read SMSNN and AFGS…ETAV. In terms of domain architecture, Rubredoxin-like spans 444-495; that stretch reads KQCMLCSVCNWVYDPEIGEPNQGVEPNTPWSSVPNDFLCPECHLGKDVFVEI. Fe cation contacts are provided by Cys-449, Cys-452, Cys-482, and Cys-485.

In the N-terminal section; belongs to the zinc metallo-hydrolase group 3 family. In terms of assembly, homotetramer. It depends on Fe cation as a cofactor. FMN is required as a cofactor.

Its subcellular location is the cytoplasm. The protein operates within nitrogen metabolism; nitric oxide reduction. In terms of biological role, anaerobic nitric oxide reductase; uses NADH to detoxify nitric oxide (NO), protecting several 4Fe-4S NO-sensitive enzymes. Has at least 2 reductase partners, only one of which (NorW, flavorubredoxin reductase) has been identified. NO probably binds to the di-iron center; electrons enter from the NorW at rubredoxin and are transferred sequentially to the FMN center and the di-iron center. Also able to function as an aerobic oxygen reductase. This is Anaerobic nitric oxide reductase flavorubredoxin from Aliivibrio fischeri (strain ATCC 700601 / ES114) (Vibrio fischeri).